The following is a 373-amino-acid chain: Flagellar P-ring protein (373 aa).

Positions 1–30 (MTNRWSFDVNKNLVTVLFTWLCLSISTAHA) are cleaved as a signal peptide.

The protein belongs to the FlgI family. In terms of assembly, the basal body constitutes a major portion of the flagellar organelle and consists of four rings (L,P,S, and M) mounted on a central rod.

Its subcellular location is the periplasm. It localises to the bacterial flagellum basal body. Functionally, assembles around the rod to form the L-ring and probably protects the motor/basal body from shearing forces during rotation. The sequence is that of Flagellar P-ring protein from Aliivibrio fischeri (strain ATCC 700601 / ES114) (Vibrio fischeri).